The primary structure comprises 131 residues: UPF0102 protein CYA_0708 (131 aa).

The protein belongs to the UPF0102 family.

The polypeptide is UPF0102 protein CYA_0708 (Synechococcus sp. (strain JA-3-3Ab) (Cyanobacteria bacterium Yellowstone A-Prime)).